A 1490-amino-acid chain; its full sequence is Leucine-rich repeat-containing protein 7 (1490 aa).

17 LRR repeats span residues 23-44, 47-68, 70-91, 93-114, 116-137, 139-161, 162-183, 185-206, 208-229, 231-253, 254-275, 277-298, 300-321, 323-344, 346-367, 369-391, and 392-413; these read IISV…VFNF, TLEE…LFNC, ALRK…IASL, NLKE…IKCC, CLTI…FTQL, NLTQ…GRLV, KLRI…MHKL, QLER…LDQI, NLRE…IGKL, MLVY…SGCE, ALED…IGLL, KLTT…IGNL, LLEE…IGYL, SLRT…IGSC, NVTV…IGQM, RLRV…TKLK, and ELAA…QTEA. A phosphoserine mark is found at Ser-439, Ser-441, and Ser-443. Residues 663–676 show a composition bias toward basic and acidic residues; that stretch reads KKESTDESEVDKTH. Disordered stretches follow at residues 663–704, 785–807, and 822–899; these read KKES…NTRM, AGEN…AHGR, and ELEQ…YHDP. Over residues 677–686 the composition is skewed to polar residues; the sequence is CLNNSVSSGT. A compositionally biased stretch (low complexity) spans 687–700; sequence YSDYSPSQASSASS. Thr-831 is modified (phosphothreonine). Ser-850 bears the Phosphoserine mark. Low complexity predominate over residues 859-871; the sequence is PSKLETTPTTSPL. A Phosphothreonine modification is found at Thr-865. Ser-869 is modified (phosphoserine). Residues 872–882 are compositionally biased toward basic and acidic residues; the sequence is PERKDHMKEPT. Phosphoserine occurs at positions 947, 949, and 1118. Positions 1134-1144 are enriched in basic and acidic residues; the sequence is PHELPPGDRYG. Disordered regions lie at residues 1134–1158 and 1196–1218; these read PHEL…QSSI and QRRP…TRPV. Arg-1149 bears the Omega-N-methylarginine mark. The span at 1196-1217 shows a compositional bias: polar residues; that stretch reads QRRPLSARSYSTESYGASQTRP. Ser-1233 carries the post-translational modification Phosphoserine. Disordered stretches follow at residues 1238 to 1265 and 1282 to 1312; these read GNYG…SCGK and RLDR…PYPL. Residues 1243 to 1263 are compositionally biased toward basic and acidic residues; that stretch reads KTSDNSDIKTRPTPVKGEESC. The span at 1286 to 1307 shows a compositional bias: polar residues; sequence TPSQQSNILDNGQEDVSPSGQW. A phosphoserine mark is found at Ser-1288 and Ser-1392. Residues 1398–1488 form the PDZ domain; that stretch reads EQFCVRIEKN…TVDLVIQREL (91 aa).

It belongs to the LAP (LRR and PDZ) protein family. Interacts with CNKSR2 and DLG4. Interacts with CTNND2/Catenin delta-2. Forms a complex with N-cadherin through CTNND2. Interacts with CAMK2A. In terms of tissue distribution, expressed in brain (at protein level).

Its subcellular location is the cytoplasm. The protein localises to the postsynaptic density. Required for normal synaptic spine architecture and function. Necessary for DISC1 and GRM5 localization to postsynaptic density complexes and for both N-methyl D-aspartate receptor-dependent and metabotropic glutamate receptor-dependent long term depression. The chain is Leucine-rich repeat-containing protein 7 (Lrrc7) from Mus musculus (Mouse).